The chain runs to 336 residues: Biotin synthase (336 aa).

The 228-residue stretch at 55 to 282 folds into the Radical SAM core domain; sequence NRVQLSKLLN…QSHVRLTAGR (228 aa). Residues Cys-70, Cys-74, and Cys-77 each coordinate [4Fe-4S] cluster. [2Fe-2S] cluster-binding residues include Cys-114, Cys-145, Cys-205, and Arg-277.

Belongs to the radical SAM superfamily. Biotin synthase family. In terms of assembly, homodimer. It depends on [4Fe-4S] cluster as a cofactor. [2Fe-2S] cluster serves as cofactor.

It catalyses the reaction (4R,5S)-dethiobiotin + (sulfur carrier)-SH + 2 reduced [2Fe-2S]-[ferredoxin] + 2 S-adenosyl-L-methionine = (sulfur carrier)-H + biotin + 2 5'-deoxyadenosine + 2 L-methionine + 2 oxidized [2Fe-2S]-[ferredoxin]. Its pathway is cofactor biosynthesis; biotin biosynthesis; biotin from 7,8-diaminononanoate: step 2/2. In terms of biological role, catalyzes the conversion of dethiobiotin (DTB) to biotin by the insertion of a sulfur atom into dethiobiotin via a radical-based mechanism. In Brucella anthropi (strain ATCC 49188 / DSM 6882 / CCUG 24695 / JCM 21032 / LMG 3331 / NBRC 15819 / NCTC 12168 / Alc 37) (Ochrobactrum anthropi), this protein is Biotin synthase.